The chain runs to 451 residues: NAC domain containing protein 52 (451 aa).

Positions 1–21 (MGRESVAVVTAPPSATAPGTA) are disordered. Positions 27–178 (LAPGFRFHPT…AYVLCRVFHK (152 aa)) constitute an NAC domain. A DNA-binding region spans residues 126–184 (LGMKKTLVFHSGRAPDGLRTNWVMHEYRLVEYETEKNGNLVQDAYVLCRVFHKNNIGPP). 2 disordered regions span residues 255–337 (DQQN…TTTT) and 370–400 (KKEK…KVND). The span at 256–270 (QQNHHENDLKPEEHN) shows a compositional bias: basic and acidic residues. The stretch at 272 to 292 (NNNYDENEETLKREQMEEEER) forms a coiled coil. Over residues 318 to 337 (ESNNNSSRNTQDHCSSTTTT) the composition is skewed to low complexity. Positions 370–384 (KKEKPQQPLRPHKEP) are enriched in basic and acidic residues. Positions 398–446 (VNDLQKEIHQMSVERETFKLEMMSAEAMISILQSRIDALRQENEELKKN) form a coiled coil.

As to quaternary structure, interacts with JMJ14 and NAC050. As to expression, mostly expressed in floral organs, and, at low levels, in other organs.

The protein localises to the nucleus. Its function is as follows. Transcriptional repressor that binds to the motif 5'-(C/T)A(C/A)G-3' in the promoter of target genes. Also binds to the 5'-CTTGNNNNNCAAG-3' consensus sequence in chromatin. Can bind to the mitochondrial dysfunction motif (MDM) present in the upstream regions of mitochondrial dysfunction stimulon (MDS) genes involved in mitochondrial retrograde regulation (MRR). Together with NAC050 and JMJ14, regulates gene expression and flowering time by associating with the histone demethylase JMJ14, probably by the promotion of RNA-mediated gene silencing. Regulates siRNA-dependent post-transcriptional gene silencing (PTGS) through SGS3 expression modulation. Required during pollen development. This Arabidopsis thaliana (Mouse-ear cress) protein is NAC domain containing protein 52.